Consider the following 269-residue polypeptide: 5'-nucleotidase SurE (269 aa).

Residues Asp-11, Asp-12, Ser-43, and Asn-101 each contribute to the a divalent metal cation site.

It belongs to the SurE nucleotidase family. It depends on a divalent metal cation as a cofactor.

The protein localises to the cytoplasm. It catalyses the reaction a ribonucleoside 5'-phosphate + H2O = a ribonucleoside + phosphate. Nucleotidase that shows phosphatase activity on nucleoside 5'-monophosphates. The sequence is that of 5'-nucleotidase SurE from Prochlorococcus marinus (strain MIT 9301).